Consider the following 217-residue polypeptide: Enoyl-CoA-hydratase (217 aa).

This sequence belongs to the enoyl-CoA hydratase/isomerase family.

The catalysed reaction is a (3S)-3-hydroxyacyl-CoA = a (2E)-enoyl-CoA + H2O. It catalyses the reaction a 4-saturated-(3S)-3-hydroxyacyl-CoA = a (3E)-enoyl-CoA + H2O. Its pathway is antibiotic biosynthesis; vancomycin biosynthesis. In terms of biological role, involved in the biosynthesis of the nonproteinogenic amino acid monomer (S)-3,5-dihydroxyphenylglycine (Dpg) responsible of the production of vancomycin and teicoplanin antibiotics. Catalyzes the syn-addition of a water molecule across the double bond of a trans-2-enoyl-CoA thioester, resulting in the formation of a beta-hydroxyacyl-CoA thioester. Physiologically, DpgB could act as a dehydratase, facilitating the aromatization of the DPA-S-DgpA or DPA-S-CoA intermediate. This Amycolatopsis orientalis (Nocardia orientalis) protein is Enoyl-CoA-hydratase (dpgB).